A 278-amino-acid polypeptide reads, in one-letter code: Tryptophan synthase alpha chain (278 aa).

Catalysis depends on proton acceptor residues Glu-49 and Asp-60.

Belongs to the TrpA family. In terms of assembly, tetramer of two alpha and two beta chains.

The catalysed reaction is (1S,2R)-1-C-(indol-3-yl)glycerol 3-phosphate + L-serine = D-glyceraldehyde 3-phosphate + L-tryptophan + H2O. Its pathway is amino-acid biosynthesis; L-tryptophan biosynthesis; L-tryptophan from chorismate: step 5/5. Functionally, the alpha subunit is responsible for the aldol cleavage of indoleglycerol phosphate to indole and glyceraldehyde 3-phosphate. This Corynebacterium diphtheriae (strain ATCC 700971 / NCTC 13129 / Biotype gravis) protein is Tryptophan synthase alpha chain.